The chain runs to 252 residues: Imidazole glycerol phosphate synthase subunit HisF (252 aa).

Residues D11 and D130 contribute to the active site.

It belongs to the HisA/HisF family. In terms of assembly, heterodimer of HisH and HisF.

The protein localises to the cytoplasm. It catalyses the reaction 5-[(5-phospho-1-deoxy-D-ribulos-1-ylimino)methylamino]-1-(5-phospho-beta-D-ribosyl)imidazole-4-carboxamide + L-glutamine = D-erythro-1-(imidazol-4-yl)glycerol 3-phosphate + 5-amino-1-(5-phospho-beta-D-ribosyl)imidazole-4-carboxamide + L-glutamate + H(+). Its pathway is amino-acid biosynthesis; L-histidine biosynthesis; L-histidine from 5-phospho-alpha-D-ribose 1-diphosphate: step 5/9. Functionally, IGPS catalyzes the conversion of PRFAR and glutamine to IGP, AICAR and glutamate. The HisF subunit catalyzes the cyclization activity that produces IGP and AICAR from PRFAR using the ammonia provided by the HisH subunit. The polypeptide is Imidazole glycerol phosphate synthase subunit HisF (Polynucleobacter necessarius subsp. necessarius (strain STIR1)).